Reading from the N-terminus, the 211-residue chain is Uracil phosphoribosyltransferase (211 aa).

30-34 (KGLVR) lines the GTP pocket. Residues Arg-79, Arg-104, and 133-141 (DPMLATGIT) contribute to the 5-phospho-alpha-D-ribose 1-diphosphate site. Residues Ile-197 and 202 to 204 (GDA) each bind uracil. A 5-phospho-alpha-D-ribose 1-diphosphate-binding site is contributed by Asp-203.

The protein belongs to the UPRTase family. Mg(2+) is required as a cofactor.

It carries out the reaction UMP + diphosphate = 5-phospho-alpha-D-ribose 1-diphosphate + uracil. It participates in pyrimidine metabolism; UMP biosynthesis via salvage pathway; UMP from uracil: step 1/1. Allosterically activated by GTP. Catalyzes the conversion of uracil and 5-phospho-alpha-D-ribose 1-diphosphate (PRPP) to UMP and diphosphate. In Pyrobaculum islandicum (strain DSM 4184 / JCM 9189 / GEO3), this protein is Uracil phosphoribosyltransferase.